Reading from the N-terminus, the 170-residue chain is Probable peptide methionine sulfoxide reductase (170 aa).

It belongs to the MsrA Met sulfoxide reductase family.

It is found in the cytoplasm. Its subcellular location is the nucleus. The enzyme catalyses L-methionyl-[protein] + [thioredoxin]-disulfide + H2O = L-methionyl-(S)-S-oxide-[protein] + [thioredoxin]-dithiol. The catalysed reaction is [thioredoxin]-disulfide + L-methionine + H2O = L-methionine (S)-S-oxide + [thioredoxin]-dithiol. Functionally, has an important function as a repair enzyme for proteins that have been inactivated by oxidation. Catalyzes the reversible oxidation-reduction of methionine sulfoxide in proteins to methionine. This chain is Probable peptide methionine sulfoxide reductase (mxr1), found in Schizosaccharomyces pombe (strain 972 / ATCC 24843) (Fission yeast).